The sequence spans 227 residues: Putative ankyrin repeat protein RF_0314 (227 aa).

ANK repeat units lie at residues N94–I126, D130–L164, and L168–F199.

The sequence is that of Putative ankyrin repeat protein RF_0314 from Rickettsia felis (strain ATCC VR-1525 / URRWXCal2) (Rickettsia azadi).